A 236-amino-acid polypeptide reads, in one-letter code: MSDDAVKQMKQVVAKAAADRVQSGMVVGLGTGSTTAFVIQFLGDRLRKGELSNIVGVPTSFQASVLAKKYGIPLVTLDDVEKLDIAIDGADEVDPAKNLIKGGGAAHTREKIVDSLAEQFLVVVDSSKLVQKLGSTFPVPVEVLPFAVAPVTRALKALGGEPELRMGVKKDGPVVTDQGNFVLDVRFDDIPDPAELEKAINNIPGVVENGLFVNVADVILVGEIVDGQPQVREIFH.

Residues 31–34 (TGST), 88–91 (DGAD), and 101–104 (KGGG) each bind substrate. E110 (proton acceptor) is an active-site residue. K128 lines the substrate pocket.

It belongs to the ribose 5-phosphate isomerase family. As to quaternary structure, homodimer.

The enzyme catalyses aldehydo-D-ribose 5-phosphate = D-ribulose 5-phosphate. The protein operates within carbohydrate degradation; pentose phosphate pathway; D-ribose 5-phosphate from D-ribulose 5-phosphate (non-oxidative stage): step 1/1. Its function is as follows. Catalyzes the reversible conversion of ribose-5-phosphate to ribulose 5-phosphate. This chain is Ribose-5-phosphate isomerase A, found in Thermosynechococcus vestitus (strain NIES-2133 / IAM M-273 / BP-1).